A 436-amino-acid polypeptide reads, in one-letter code: Protein GOLM2 (436 aa).

N-acetylmethionine is present on Met1. The Cytoplasmic segment spans residues 1 to 14 (MVGFGANRRAGRLP). A helical; Signal-anchor for type II membrane protein membrane pass occupies residues 15-35 (SLVLVVLLVVIVVLAFNYWSI). The stretch at 35-198 (ISSRHVLLQE…EEQKQETQKI (164 aa)) forms a coiled coil. The Lumenal segment spans residues 36–436 (SSRHVLLQEE…YGKQHFNDVL (401 aa)). The span at 225 to 247 (ADKNEEPSSNHIPHGKEQIKRGG) shows a compositional bias: basic and acidic residues. Residues 225 to 436 (ADKNEEPSSN…YGKQHFNDVL (212 aa)) form a disordered region. Ser233 and Ser275 each carry phosphoserine. Residues 305–321 (NHNGNPGTSKQNPSSPL) show a composition bias toward polar residues. Phosphoserine is present on residues Ser328 and Ser332. Basic and acidic residues predominate over residues 344–362 (ATKDRVSDFHKLKQSRFFD). Ser366 carries the post-translational modification Phosphoserine. Positions 399–418 (YNEEEDGDGGEEDVQDDEER) are enriched in acidic residues. Basic and acidic residues predominate over residues 426–436 (DYGKQHFNDVL).

This sequence belongs to the GOLM family.

The protein resides in the membrane. The polypeptide is Protein GOLM2 (Homo sapiens (Human)).